A 490-amino-acid polypeptide reads, in one-letter code: Betaine aldehyde dehydrogenase (490 aa).

D93 contacts K(+). 150–152 (GAW) lines the NAD(+) pocket. The active-site Charge relay system is K162. Position 176 to 179 (176 to 179 (KPSE)) interacts with NAD(+). V180 is a K(+) binding site. Residue 230 to 233 (GIAS) coordinates NAD(+). Residue L246 coordinates K(+). The Proton acceptor role is filled by E252. 3 residues coordinate NAD(+): G254, C286, and E387. C286 acts as the Nucleophile in catalysis. C286 is modified (cysteine sulfenic acid (-SOH)). Positions 457 and 460 each coordinate K(+). Catalysis depends on E464, which acts as the Charge relay system.

The protein belongs to the aldehyde dehydrogenase family. In terms of assembly, dimer of dimers. The cofactor is K(+).

The enzyme catalyses betaine aldehyde + NAD(+) + H2O = glycine betaine + NADH + 2 H(+). Its pathway is amine and polyamine biosynthesis; betaine biosynthesis via choline pathway; betaine from betaine aldehyde: step 1/1. In terms of biological role, involved in the biosynthesis of the osmoprotectant glycine betaine. Catalyzes the irreversible oxidation of betaine aldehyde to the corresponding acid. The chain is Betaine aldehyde dehydrogenase from Yersinia pseudotuberculosis serotype I (strain IP32953).